The chain runs to 348 residues: Aspartate carbamoyltransferase catalytic subunit (348 aa).

2 residues coordinate carbamoyl phosphate: arginine 59 and threonine 60. Lysine 87 serves as a coordination point for L-aspartate. Arginine 109, histidine 142, and glutamine 145 together coordinate carbamoyl phosphate. Residues arginine 182 and arginine 253 each contribute to the L-aspartate site. 2 residues coordinate carbamoyl phosphate: glycine 294 and proline 295.

The protein belongs to the aspartate/ornithine carbamoyltransferase superfamily. ATCase family. Heterododecamer (2C3:3R2) of six catalytic PyrB chains organized as two trimers (C3), and six regulatory PyrI chains organized as three dimers (R2).

The enzyme catalyses carbamoyl phosphate + L-aspartate = N-carbamoyl-L-aspartate + phosphate + H(+). It functions in the pathway pyrimidine metabolism; UMP biosynthesis via de novo pathway; (S)-dihydroorotate from bicarbonate: step 2/3. Functionally, catalyzes the condensation of carbamoyl phosphate and aspartate to form carbamoyl aspartate and inorganic phosphate, the committed step in the de novo pyrimidine nucleotide biosynthesis pathway. The chain is Aspartate carbamoyltransferase catalytic subunit from Prochlorococcus marinus (strain MIT 9303).